A 158-amino-acid polypeptide reads, in one-letter code: Nuclear cap-binding protein subunit 2 (158 aa).

Residues Y17, Y40, 109 to 113, 120 to 124, and 130 to 131 contribute to the mRNA site; these read RADWD, RQYGR, and QV. The RRM domain maps to 37–115; the sequence is CTLYVGNLSY…RVIRADWDAG (79 aa). Residues 123–158 are disordered; that stretch reads GRGKHGGQVRDEYRKDYDPERGGYNRAIAQKGGDRQ. Over residues 130 to 145 the composition is skewed to basic and acidic residues; it reads QVRDEYRKDYDPERGG.

This sequence belongs to the RRM NCBP2 family. As to quaternary structure, component of the nuclear cap-binding complex (CBC), a heterodimer composed of ncbp-1 and ncbp-2 that interacts with m7GpppG-capped RNA.

The protein resides in the nucleus. In terms of biological role, component of the cap-binding complex (CBC), which binds co-transcriptionally to the 5' cap of pre-mRNAs and is involved in various processes such as pre-mRNA splicing and RNA-mediated gene silencing (RNAi). The CBC complex is involved in miRNA-mediated RNA interference and is required for primary microRNAs (miRNAs) processing. In the CBC complex, ncbp-2 recognizes and binds capped RNAs (m7GpppG-capped RNA) but requires ncbp-1 to stabilize the movement of its N-terminal loop and lock the CBC into a high affinity cap-binding state with the cap structure. The sequence is that of Nuclear cap-binding protein subunit 2 (ncbp-2) from Caenorhabditis elegans.